Consider the following 253-residue polypeptide: Probable U2 small nuclear ribonucleoprotein A' (253 aa).

LRR repeat units follow at residues 20-41 (NMREINLRGQKIPVIENMGVTR), 43-64 (QFDVIDLTDNDIRKLDNFPTFS), 65-86 (RLNTLYLHNNRINYIAPDIATK), and 89-110 (NLKTLALTNNNICELGDIEPLA). In terms of domain architecture, LRRCT spans 123–161 (NPITHKDNYRMYMIYKLPTVRVIDFNRVRLTEREAAKKM). Disordered regions lie at residues 163-205 (KGKS…EDRE) and 232-253 (VPEKGWNRQMDQNGADGEAMES). Residues 169 to 182 (KARDAIQKSVHTED) show a composition bias toward basic and acidic residues.

This sequence belongs to the U2 small nuclear ribonucleoprotein A family. In terms of assembly, interacts with rnp-3.

Its subcellular location is the nucleus. In terms of biological role, this protein is associated with sn-RNP U2. It helps the A' protein to bind stem loop IV of U2 snRNA. Required maternally for early embryonic development and zygotically for germline and somatic development. Has a role in the switch from mitosis to meiosis. Might function in alternative splicing. The chain is Probable U2 small nuclear ribonucleoprotein A' (mog-2) from Caenorhabditis elegans.